A 148-amino-acid chain; its full sequence is uncharacterized protein (148 aa).

This sequence belongs to the SufE family.

This is an uncharacterized protein from Rhizobium etli (strain ATCC 51251 / DSM 11541 / JCM 21823 / NBRC 15573 / CFN 42).